The sequence spans 228 residues: Heptaprenylglyceryl phosphate synthase (228 aa).

Lys12 contributes to the sn-glycerol 1-phosphate binding site. The Mg(2+) site is built by Asp14 and Ser40. Residues 159–164 (YLEYSG), Gly189, and 209–210 (GN) each bind sn-glycerol 1-phosphate.

The protein belongs to the GGGP/HepGP synthase family. Group I subfamily. In terms of assembly, homodimer. Mg(2+) is required as a cofactor.

It catalyses the reaction sn-glycerol 1-phosphate + all-trans-heptaprenyl diphosphate = 3-heptaprenyl-sn-glycero-1-phosphate + diphosphate. It participates in membrane lipid metabolism; glycerophospholipid metabolism. In terms of biological role, prenyltransferase that catalyzes in vivo the transfer of the heptaprenyl moiety of heptaprenyl pyrophosphate (HepPP; 35 carbon atoms) to the C3 hydroxyl of sn-glycerol-1-phosphate (G1P), producing heptaprenylglyceryl phosphate (HepGP). This reaction is an ether-bond-formation step in the biosynthesis of archaea-type G1P-based membrane lipids found in Bacillales. The chain is Heptaprenylglyceryl phosphate synthase from Bacillus licheniformis (strain ATCC 14580 / DSM 13 / JCM 2505 / CCUG 7422 / NBRC 12200 / NCIMB 9375 / NCTC 10341 / NRRL NRS-1264 / Gibson 46).